The chain runs to 216 residues: Large ribosomal subunit protein uL3 (216 aa).

The disordered stretch occupies residues 119 to 143 (GYQGNIHKDGQSRGPMAHGSRYHRR).

Belongs to the universal ribosomal protein uL3 family. Part of the 50S ribosomal subunit. Forms a cluster with proteins L14 and L19.

Its function is as follows. One of the primary rRNA binding proteins, it binds directly near the 3'-end of the 23S rRNA, where it nucleates assembly of the 50S subunit. This chain is Large ribosomal subunit protein uL3, found in Levilactobacillus brevis (strain ATCC 367 / BCRC 12310 / CIP 105137 / JCM 1170 / LMG 11437 / NCIMB 947 / NCTC 947) (Lactobacillus brevis).